A 590-amino-acid polypeptide reads, in one-letter code: Probable lysine-specific demethylase 4B (590 aa).

Residues 9–51 form the JmjN domain; that stretch reads IKVFRPTWEEFKDFPKYVAYMESQGAHKAGLAKVVPPPEWVPR. Tyr-130 lines the 2-oxoglutarate pocket. Positions 140–306 constitute a JmjC domain; the sequence is DTDQDSWNIN…YGKRAVQCTC (167 aa). Fe cation contacts are provided by His-186 and Glu-188. 2-oxoglutarate contacts are provided by Asn-196 and Lys-204. The Zn(2+) site is built by Cys-232 and His-238. Lys-239 lines the 2-oxoglutarate pocket. His-274 contacts Fe cation. Cys-304 and Cys-306 together coordinate Zn(2+). Disordered stretches follow at residues 372 to 395 and 417 to 590; these read PTKA…QNPN and ATDE…TASP. Residues 445–458 are compositionally biased toward acidic residues; sequence EYIDDGTEDDDEEE. Basic residues predominate over residues 480 to 494; it reads SKRKTNSRNNRGRSP. 2 stretches are compositionally biased toward low complexity: residues 502–513 and 537–571; these read ISPASSTSSTSR and TTSP…TPPA.

This sequence belongs to the JHDM3 histone demethylase family. The cofactor is Fe(2+).

The protein localises to the nucleus. The enzyme catalyses N(6),N(6),N(6)-trimethyl-L-lysyl(9)-[histone H3] + 2 2-oxoglutarate + 2 O2 = N(6)-methyl-L-lysyl(9)-[histone H3] + 2 formaldehyde + 2 succinate + 2 CO2. In terms of biological role, probable histone demethylase that specifically demethylates 'Lys-9' and 'Lys-36' residues of histone H3, thereby playing a central role in histone code. Demethylation of Lys residue generates formaldehyde and succinate. This chain is Probable lysine-specific demethylase 4B (Kdm4B), found in Drosophila melanogaster (Fruit fly).